A 374-amino-acid polypeptide reads, in one-letter code: Golgi-associated kinase 1B (374 aa).

The Cytoplasmic segment spans residues 1-38 (MSPDRTGRGSSSSSSSLKRLVCKSFVRAWGRRRPNLRR). A helical; Signal-anchor for type II membrane protein transmembrane segment spans residues 39-61 (AVLLICTASAIYGIVIASQVLRG). Over 62–374 (STHPGKALRK…LLQVYTRLDR (313 aa)) the chain is Extracellular. Residues 136-146 (VRPKKRRKYGA) are compositionally biased toward basic residues. The segment at 136-177 (VRPKKRRKYGARRPGVVQDTESKKDTLWSKVPNSQHKSQAQS) is disordered. The segment covering 166-177 (VPNSQHKSQAQS) has biased composition (polar residues). Asparagine 281 and asparagine 314 each carry an N-linked (GlcNAc...) asparagine glycan.

It belongs to the GASK family.

It is found in the golgi apparatus membrane. The polypeptide is Golgi-associated kinase 1B (Xenopus laevis (African clawed frog)).